The primary structure comprises 73 residues: Alpha-amylase inhibitor Paim-1 (73 aa).

2 disulfides stabilise this stretch: cysteine 8-cysteine 24 and cysteine 42-cysteine 70.

Its function is as follows. Inhibits mammalian alpha-amylases specifically but has no action on plant and microbial alpha-amylases. This chain is Alpha-amylase inhibitor Paim-1, found in Streptomyces olivaceoviridis (Streptomyces corchorusii).